The primary structure comprises 329 residues: NAD(+) hydrolase TcpA (329 aa).

An MPN domain is found at 5–134 (VSISYLALEQ…ADCVRFYTVR (130 aa)). Positions 192-324 (FEYDVFICHA…YVVNEILRVL (133 aa)) constitute a TIR domain. NAD(+)-binding positions include 201–202 (AH) and Ser231. The active site involves Glu267.

The catalysed reaction is NAD(+) + H2O = ADP-D-ribose + nicotinamide + H(+). In terms of biological role, NAD(+) hydrolase (NADase) that catalyzes cleavage of NAD(+) into ADP-D-ribose (ADPR) and nicotinamide. The sequence is that of NAD(+) hydrolase TcpA from Theionarchaea archaeon (strain DG-70-1).